The following is a 326-amino-acid chain: L-lactate dehydrogenase (326 aa).

NAD(+) is bound by residues V26, D47, K52, Y78, and 92 to 93 (GA). Substrate-binding residues include Q95 and R101. NAD(+) is bound by residues T114, 131–133 (ASN), and S156. 133 to 136 (NPVD) serves as a coordination point for substrate. A substrate-binding site is contributed by 161–164 (DTAR). Beta-D-fructose 1,6-bisphosphate contacts are provided by R166 and H181. The active-site Proton acceptor is the H188. Y233 carries the phosphotyrosine modification. T242 lines the substrate pocket.

It belongs to the LDH/MDH superfamily. LDH family. In terms of assembly, homotetramer.

The protein resides in the cytoplasm. The enzyme catalyses (S)-lactate + NAD(+) = pyruvate + NADH + H(+). The protein operates within fermentation; pyruvate fermentation to lactate; (S)-lactate from pyruvate: step 1/1. Its activity is regulated as follows. Allosterically activated by fructose 1,6-bisphosphate (FBP). Catalyzes the conversion of lactate to pyruvate. The chain is L-lactate dehydrogenase from Corynebacterium jeikeium (strain K411).